A 366-amino-acid chain; its full sequence is Small ribosomal subunit biogenesis GTPase RsgA (366 aa).

The CP-type G domain maps to 107-266 (RSEGQILAAN…LIDTPGLRGV (160 aa)). Residues 154-157 (TKAD) and 208-216 (GQSGAGKST) each bind GTP. The Zn(2+) site is built by Cys-289, Cys-294, His-296, and Cys-302.

Belongs to the TRAFAC class YlqF/YawG GTPase family. RsgA subfamily. In terms of assembly, monomer. Associates with 30S ribosomal subunit, binds 16S rRNA. The cofactor is Zn(2+).

It is found in the cytoplasm. In terms of biological role, one of several proteins that assist in the late maturation steps of the functional core of the 30S ribosomal subunit. Helps release RbfA from mature subunits. May play a role in the assembly of ribosomal proteins into the subunit. Circularly permuted GTPase that catalyzes slow GTP hydrolysis, GTPase activity is stimulated by the 30S ribosomal subunit. The protein is Small ribosomal subunit biogenesis GTPase RsgA of Streptomyces coelicolor (strain ATCC BAA-471 / A3(2) / M145).